The sequence spans 658 residues: DNA mismatch repair protein MutL (658 aa).

The segment covering 114–130 (RQEDSSHATQVKAEDGK) has biased composition (basic and acidic residues). Disordered regions lie at residues 114–137 (RQED…PTAA), 369–401 (DYPT…APQQ), and 438–457 (FGNM…LSDG).

It belongs to the DNA mismatch repair MutL/HexB family.

Its function is as follows. This protein is involved in the repair of mismatches in DNA. It is required for dam-dependent methyl-directed DNA mismatch repair. May act as a 'molecular matchmaker', a protein that promotes the formation of a stable complex between two or more DNA-binding proteins in an ATP-dependent manner without itself being part of a final effector complex. This Neisseria meningitidis serogroup A / serotype 4A (strain DSM 15465 / Z2491) protein is DNA mismatch repair protein MutL.